The sequence spans 270 residues: tRNA pseudouridine synthase A (270 aa).

Asp51 acts as the Nucleophile in catalysis. Tyr109 serves as a coordination point for substrate.

It belongs to the tRNA pseudouridine synthase TruA family. Homodimer.

It catalyses the reaction uridine(38/39/40) in tRNA = pseudouridine(38/39/40) in tRNA. Its function is as follows. Formation of pseudouridine at positions 38, 39 and 40 in the anticodon stem and loop of transfer RNAs. This chain is tRNA pseudouridine synthase A, found in Burkholderia lata (strain ATCC 17760 / DSM 23089 / LMG 22485 / NCIMB 9086 / R18194 / 383).